Here is a 216-residue protein sequence, read N- to C-terminus: Maintenance of carboxysome distribution protein A (216 aa).

ATP contacts are provided by Gly18, Gly19, Gly21, Lys22, Thr23, Thr24, and Gln47. Thr23 is a binding site for Mg(2+).

This sequence belongs to the ParA family. McdA subfamily. As to quaternary structure, homodimerizes in the presence of ATP. Each subunit binds 1 ATP molecule; some residues cross the dimer interface to contact ATP in the other subunit. Forms a complex with McdB.

The protein resides in the cytoplasm. The protein localises to the nucleoid. It carries out the reaction ATP + H2O = ADP + phosphate + H(+). Functionally, mcdA and McdB together mediate carboxysome (Cb) spacing, size, ultrastructure and probably inheritance in the cell, together they prevent Cb aggregation. McdA is an ATPase that forms dynamic gradients on the nucleoid in response to adapter protein McdB, which associates with carboxysomes. The interplay between McdA gradients on the nucleoid and McdB-bound carboxysomes result in the equal spacing of Cbs along the cell length. Its function is as follows. Incorrect positioning (aggregation) of carboxysomes results in reduced CO(2) fixation by encapsulated ribulose-1,5-bisphosphate carboxylase (RuBisCO, cbbL/cbbS), which leads to slower growth. The chain is Maintenance of carboxysome distribution protein A from Gloeobacter kilaueensis (strain ATCC BAA-2537 / CCAP 1431/1 / ULC 316 / JS1).